We begin with the raw amino-acid sequence, 126 residues long: Aspartate 1-decarboxylase (126 aa).

The active-site Schiff-base intermediate with substrate; via pyruvic acid is the serine 25. The residue at position 25 (serine 25) is a Pyruvic acid (Ser). Threonine 57 serves as a coordination point for substrate. The Proton donor role is filled by tyrosine 58. 73-75 (GAA) lines the substrate pocket.

It belongs to the PanD family. As to quaternary structure, heterooctamer of four alpha and four beta subunits. Pyruvate is required as a cofactor. Post-translationally, is synthesized initially as an inactive proenzyme, which is activated by self-cleavage at a specific serine bond to produce a beta-subunit with a hydroxyl group at its C-terminus and an alpha-subunit with a pyruvoyl group at its N-terminus.

The protein localises to the cytoplasm. The enzyme catalyses L-aspartate + H(+) = beta-alanine + CO2. It functions in the pathway cofactor biosynthesis; (R)-pantothenate biosynthesis; beta-alanine from L-aspartate: step 1/1. In terms of biological role, catalyzes the pyruvoyl-dependent decarboxylation of aspartate to produce beta-alanine. In Pectobacterium carotovorum subsp. carotovorum (strain PC1), this protein is Aspartate 1-decarboxylase.